Consider the following 235-residue polypeptide: Ribosomal RNA large subunit methyltransferase E (235 aa).

S-adenosyl-L-methionine-binding residues include G76, W78, D99, D115, and D139. Catalysis depends on K179, which acts as the Proton acceptor.

Belongs to the class I-like SAM-binding methyltransferase superfamily. RNA methyltransferase RlmE family.

The protein localises to the cytoplasm. The catalysed reaction is uridine(2552) in 23S rRNA + S-adenosyl-L-methionine = 2'-O-methyluridine(2552) in 23S rRNA + S-adenosyl-L-homocysteine + H(+). Functionally, specifically methylates the uridine in position 2552 of 23S rRNA at the 2'-O position of the ribose in the fully assembled 50S ribosomal subunit. This Rhodopseudomonas palustris (strain BisA53) protein is Ribosomal RNA large subunit methyltransferase E.